The chain runs to 345 residues: Gibberellin receptor GID1A (345 aa).

Alanine 2 carries the post-translational modification N-acetylalanine. The short motif at 113-115 (HGG) is the Involved in the stabilization of the negatively charged intermediate by the formation of the oxyanion hole element. Gibberellin A4 is bound by residues 115–116 (GS), tyrosine 127, and serine 191. 4 residues coordinate gibberellin A3: serine 116, tyrosine 127, serine 191, and phenylalanine 238. Serine 191 is an active-site residue. Aspartate 289 is an active-site residue. Residue glycine 320 participates in gibberellin A4 binding. Residue glycine 320 coordinates gibberellin A3.

It belongs to the 'GDXG' lipolytic enzyme family. As to quaternary structure, interacts (via N-terminus) with the DELLA proteins GAI, RGA, RGL1, RGL2 and RGL3 (via N-terminus) in a GA-dependent manner. As to expression, widely expressed.

It localises to the nucleus. Its function is as follows. Functions as a soluble gibberellin (GA) receptor. GA is an essential hormone that regulates growth and development in plants. Binds with high affinity the biologically active gibberellin GA4, but has no affinity for the biologically inactive GAs. In response to GA, interacts with specific DELLA proteins, known as repressors of GA-induced growth, and targets them for degradation via proteasome. Seems to be required for GA signaling that controls root growth, seed germination, stem elongation and flower development. Partially redundant with GID1B and GID1C. This Arabidopsis thaliana (Mouse-ear cress) protein is Gibberellin receptor GID1A (GID1A).